A 245-amino-acid chain; its full sequence is Biosynthetic peptidoglycan transglycosylase (245 aa).

The chain crosses the membrane as a helical span at residues V20 to A42.

It belongs to the glycosyltransferase 51 family.

Its subcellular location is the cell inner membrane. It catalyses the reaction [GlcNAc-(1-&gt;4)-Mur2Ac(oyl-L-Ala-gamma-D-Glu-L-Lys-D-Ala-D-Ala)](n)-di-trans,octa-cis-undecaprenyl diphosphate + beta-D-GlcNAc-(1-&gt;4)-Mur2Ac(oyl-L-Ala-gamma-D-Glu-L-Lys-D-Ala-D-Ala)-di-trans,octa-cis-undecaprenyl diphosphate = [GlcNAc-(1-&gt;4)-Mur2Ac(oyl-L-Ala-gamma-D-Glu-L-Lys-D-Ala-D-Ala)](n+1)-di-trans,octa-cis-undecaprenyl diphosphate + di-trans,octa-cis-undecaprenyl diphosphate + H(+). The protein operates within cell wall biogenesis; peptidoglycan biosynthesis. Functionally, peptidoglycan polymerase that catalyzes glycan chain elongation from lipid-linked precursors. The protein is Biosynthetic peptidoglycan transglycosylase of Burkholderia cenocepacia (strain HI2424).